Reading from the N-terminus, the 312-residue chain is Ribosomal RNA small subunit methyltransferase H (312 aa).

S-adenosyl-L-methionine is bound by residues 33-35 (GGY), Asp51, Phe78, Asp97, and Gln104.

Belongs to the methyltransferase superfamily. RsmH family.

It is found in the cytoplasm. It catalyses the reaction cytidine(1402) in 16S rRNA + S-adenosyl-L-methionine = N(4)-methylcytidine(1402) in 16S rRNA + S-adenosyl-L-homocysteine + H(+). Functionally, specifically methylates the N4 position of cytidine in position 1402 (C1402) of 16S rRNA. In Orientia tsutsugamushi (strain Boryong) (Rickettsia tsutsugamushi), this protein is Ribosomal RNA small subunit methyltransferase H.